Reading from the N-terminus, the 213-residue chain is Pyridoxine/pyridoxamine 5'-phosphate oxidase (213 aa).

Residues 60-65 (RMVLMK), 75-76 (YS), K82, and Q104 contribute to the FMN site. K65 is a substrate binding site. Y122 and R126 together coordinate substrate. FMN-binding positions include 139 to 140 (QS) and W184. A substrate-binding site is contributed by 190-192 (RLH). Residue R194 participates in FMN binding.

It belongs to the pyridoxamine 5'-phosphate oxidase family. As to quaternary structure, homodimer. FMN serves as cofactor.

The catalysed reaction is pyridoxamine 5'-phosphate + O2 + H2O = pyridoxal 5'-phosphate + H2O2 + NH4(+). The enzyme catalyses pyridoxine 5'-phosphate + O2 = pyridoxal 5'-phosphate + H2O2. The protein operates within cofactor metabolism; pyridoxal 5'-phosphate salvage; pyridoxal 5'-phosphate from pyridoxamine 5'-phosphate: step 1/1. It participates in cofactor metabolism; pyridoxal 5'-phosphate salvage; pyridoxal 5'-phosphate from pyridoxine 5'-phosphate: step 1/1. Catalyzes the oxidation of either pyridoxine 5'-phosphate (PNP) or pyridoxamine 5'-phosphate (PMP) into pyridoxal 5'-phosphate (PLP). This chain is Pyridoxine/pyridoxamine 5'-phosphate oxidase, found in Rhodopseudomonas palustris (strain BisA53).